We begin with the raw amino-acid sequence, 176 residues long: RNA 2',3'-cyclic phosphodiesterase (176 aa).

H43 serves as the catalytic Proton donor. Short sequence motifs (HXTX) lie at residues 43–46 and 125–128; these read HLTL and HITL. H125 acts as the Proton acceptor in catalysis.

Belongs to the 2H phosphoesterase superfamily. ThpR family. As to quaternary structure, monomer.

It catalyses the reaction a 3'-end 2',3'-cyclophospho-ribonucleotide-RNA + H2O = a 3'-end 2'-phospho-ribonucleotide-RNA + H(+). Hydrolyzes RNA 2',3'-cyclic phosphodiester to an RNA 2'-phosphomonoester. In vitro, can also ligate 5' and 3' half-tRNA molecules with 2',3'-cyclic phosphate and 5'-hydroxyl termini, respectively, to the product containing the 2'-5' phosphodiester linkage. This reaction does not require ATP and is reversible. The protein is RNA 2',3'-cyclic phosphodiesterase of Escherichia coli (strain K12).